A 225-amino-acid chain; its full sequence is Cytochrome c oxidase subunit 2 (225 aa).

The Mitochondrial intermembrane segment spans residues 1–25 (MSTWMMFMFQESNSFYADNLVSFHN). The chain crosses the membrane as a helical span at residues 26-47 (LVMMIIIMISTLTIYIIFDLFM). Residues 48-62 (NKFSNLFLLKNHNIE) lie on the Mitochondrial matrix side of the membrane. Residues 63-82 (IIWTIVPIVILLIICFPSLK) form a helical membrane-spanning segment. Topologically, residues 83-225 (ILYLIDEIIN…FFLNWINKQN (143 aa)) are mitochondrial intermembrane. Cu cation contacts are provided by His-159, Cys-194, Glu-196, Cys-198, His-202, and Met-205. Glu-196 provides a ligand contact to Mg(2+).

Belongs to the cytochrome c oxidase subunit 2 family. In terms of assembly, component of the cytochrome c oxidase (complex IV, CIV), a multisubunit enzyme composed of a catalytic core of 3 subunits and several supernumerary subunits. The complex exists as a monomer or a dimer and forms supercomplexes (SCs) in the inner mitochondrial membrane with ubiquinol-cytochrome c oxidoreductase (cytochrome b-c1 complex, complex III, CIII). Cu cation is required as a cofactor.

The protein localises to the mitochondrion inner membrane. The catalysed reaction is 4 Fe(II)-[cytochrome c] + O2 + 8 H(+)(in) = 4 Fe(III)-[cytochrome c] + 2 H2O + 4 H(+)(out). Its function is as follows. Component of the cytochrome c oxidase, the last enzyme in the mitochondrial electron transport chain which drives oxidative phosphorylation. The respiratory chain contains 3 multisubunit complexes succinate dehydrogenase (complex II, CII), ubiquinol-cytochrome c oxidoreductase (cytochrome b-c1 complex, complex III, CIII) and cytochrome c oxidase (complex IV, CIV), that cooperate to transfer electrons derived from NADH and succinate to molecular oxygen, creating an electrochemical gradient over the inner membrane that drives transmembrane transport and the ATP synthase. Cytochrome c oxidase is the component of the respiratory chain that catalyzes the reduction of oxygen to water. Electrons originating from reduced cytochrome c in the intermembrane space (IMS) are transferred via the dinuclear copper A center (CU(A)) of subunit 2 and heme A of subunit 1 to the active site in subunit 1, a binuclear center (BNC) formed by heme A3 and copper B (CU(B)). The BNC reduces molecular oxygen to 2 water molecules using 4 electrons from cytochrome c in the IMS and 4 protons from the mitochondrial matrix. The polypeptide is Cytochrome c oxidase subunit 2 (COII) (Apis koschevnikovi (Koschevnikov's honey bee)).